The sequence spans 342 residues: Protein-glutamate methylesterase/protein-glutamine glutaminase 2 (342 aa).

Positions 2 to 119 constitute a Response regulatory domain; the sequence is NIGIVNDLPL…GGSADPSQPL (118 aa). Position 53 is a 4-aspartylphosphate (D53). The CheB-type methylesterase domain maps to 144-337; sequence PAPQGALPPL…DQLISLVQRN (194 aa). Catalysis depends on residues S159, H186, and D279.

The protein belongs to the CheB family. Phosphorylated by CheA. Phosphorylation of the N-terminal regulatory domain activates the methylesterase activity.

It is found in the cytoplasm. The enzyme catalyses [protein]-L-glutamate 5-O-methyl ester + H2O = L-glutamyl-[protein] + methanol + H(+). The catalysed reaction is L-glutaminyl-[protein] + H2O = L-glutamyl-[protein] + NH4(+). Involved in chemotaxis. Part of a chemotaxis signal transduction system that modulates chemotaxis in response to various stimuli. Catalyzes the demethylation of specific methylglutamate residues introduced into the chemoreceptors (methyl-accepting chemotaxis proteins or MCP) by CheR. Also mediates the irreversible deamidation of specific glutamine residues to glutamic acid. This Burkholderia mallei (strain ATCC 23344) protein is Protein-glutamate methylesterase/protein-glutamine glutaminase 2.